Reading from the N-terminus, the 422-residue chain is Zinc finger protein zfp-2 (422 aa).

The interval 95-119 is disordered; it reads AIPCTSSSMQPSTSSNPSSGEHQPV. Residues 99-113 show a composition bias toward low complexity; sequence TSSSMQPSTSSNPSS. 7 consecutive C2H2-type zinc fingers follow at residues 171–194, 200–222, 229–251, 255–278, 300–322, 328–350, and 356–379; these read YRCT…QEVH, FRCF…LKDH, FSCD…HKMH, STCQ…STAH, YSCS…ERIH, YSCG…IRTH, and YGCG…LAAH.

Expressed in vulval cells and all somatic gonad structures such as spermatheca, sheath cells, uterine cells and distal tip cells.

Its subcellular location is the nucleus. Its function is as follows. Probable zinc finger transcription factor that acts as a transcriptional repressor. Acts redundantly with the transcriptional repressor lin-35 to control the development of somatic gonad lineages. May, in addition, suppress sensitivity to RNAi. The polypeptide is Zinc finger protein zfp-2 (Caenorhabditis elegans).